The sequence spans 130 residues: Albumin-1 D (130 aa).

A signal peptide spans 1 to 26 (MASVKLASLIVLFATLGMFLTKNVGA). Cystine bridges form between cysteine 29–cysteine 46, cysteine 33–cysteine 48, and cysteine 41–cysteine 58. 2 propeptides span residues 64-69 (VFLKAN) and 123-130 (LLKSVSTA).

In terms of processing, the C-terminal glycine may be removed from PA1b. In terms of tissue distribution, major component of both the cotyledons and embryonic axes of mature seeds.

Its function is as follows. PA1b binds to basic 7S globulin (BG) and stimulates its phosphorylation activity. Involved in the signal transduction system to regulate the growth and differentiation as a hormone peptide. Toxic to various insects through binding to a high affinity binding site in the insect gut. This chain is Albumin-1 D, found in Pisum sativum (Garden pea).